Consider the following 616-residue polypeptide: 2-isopropylmalate synthase (616 aa).

The segment at 1-34 is disordered; sequence MSPNDAFISAPAKIETPVGPRNEGQPAWNKQRGS. Positions 67 to 341 constitute a Pyruvate carboxyltransferase domain; that stretch reads PQWCAVDLRD…DPQLDFTDIR (275 aa). Mg(2+)-binding residues include D76, H280, H282, and N316. A regulatory domain region spans residues 490–616; that stretch reads RTAPVEQIAL…NHEAVLAGGV (127 aa).

Belongs to the alpha-IPM synthase/homocitrate synthase family. LeuA type 2 subfamily. Homodimer. It depends on Mg(2+) as a cofactor.

Its subcellular location is the cytoplasm. It catalyses the reaction 3-methyl-2-oxobutanoate + acetyl-CoA + H2O = (2S)-2-isopropylmalate + CoA + H(+). It participates in amino-acid biosynthesis; L-leucine biosynthesis; L-leucine from 3-methyl-2-oxobutanoate: step 1/4. Inhibited by L-leucine, the pathway end product. Catalyzes the condensation of the acetyl group of acetyl-CoA with 3-methyl-2-oxobutanoate (2-ketoisovalerate) to form 3-carboxy-3-hydroxy-4-methylpentanoate (2-isopropylmalate). Complements an E.coli leuA deletion. In Corynebacterium glutamicum (strain ATCC 13032 / DSM 20300 / JCM 1318 / BCRC 11384 / CCUG 27702 / LMG 3730 / NBRC 12168 / NCIMB 10025 / NRRL B-2784 / 534), this protein is 2-isopropylmalate synthase.